The sequence spans 353 residues: MSVAGLKKQFHKATQKVSEKVGGAEGTKLDDDFKEMERKVDVTSRAVMEIMAKTIEYLQPNPASRAKLSMINTMSKIRGQEKGPGYPQAEALLADAMLKFGRELGEECNFGPALADVGEAMKELSEVKDSLDMEVKQNFIDPLQNLHDKDLREIQHHLKKMEGRRLDFDYKKKRQGKLPDEELRQALEKFDESKEIAESSMFNLLEMDIEQVSQLSALVQAQLEYHKQATQILQRVTSKLEDRIKEASSQPKREYQPKPRMSLDFTSGGDNTQHNGGISHATTPKPAGAHMDQPCCRALYDFEPENEGELGFKEGDIITLTNQIDENWYEGMLHGQSGFFPINYVDILVPLPN.

Positions methionine 1–valine 21 are membrane-binding amphipathic helix. Residues methionine 1–threonine 27 are disordered. The interval methionine 1–serine 125 is binds and tubulates liposomes. The region spanning serine 18–serine 249 is the BAR domain. The tract at residues proline 60 to proline 87 is required for dimerization upon membrane association. The stretch at glutamate 181–methionine 201 forms a coiled coil. Over residues arginine 243–proline 257 the composition is skewed to basic and acidic residues. The tract at residues arginine 243 to histidine 290 is disordered. Positions aspartate 264 to threonine 282 are enriched in polar residues. One can recognise an SH3 domain in the interval methionine 291–proline 350.

Belongs to the endophilin family. Monomer; in cytoplasm. Homodimer; when associated with membranes. Associates with MAP4K3. This interaction appears to regulate MAP4K3-mediated JNK activation. Interacts with SYNJ1 and DNM1. Highly expressed in brain.

It is found in the cytoplasm. The protein localises to the membrane. The protein resides in the early endosome. It localises to the presynapse. Implicated in synaptic vesicle endocytosis. May recruit other proteins to membranes with high curvature. In Gallus gallus (Chicken), this protein is Endophilin-A1.